Consider the following 273-residue polypeptide: Eukaryotic translation initiation factor 3 subunit G-2 (273 aa).

The tract at residues 168–192 (PPFMKDGGGGSGGKNWGRGRDRDDS) is disordered. Gly residues predominate over residues 173–183 (DGGGGSGGKNW). Positions 193 to 271 (SAVRISNLSE…LILCVEWSKP (79 aa)) constitute an RRM domain.

Belongs to the eIF-3 subunit G family. In terms of assembly, component of the eukaryotic translation initiation factor 3 (eIF-3) complex. The eIF-3 complex interacts with pix.

It is found in the cytoplasm. In terms of biological role, RNA-binding component of the eukaryotic translation initiation factor 3 (eIF-3) complex, which is involved in protein synthesis of a specialized repertoire of mRNAs and, together with other initiation factors, stimulates binding of mRNA and methionyl-tRNAi to the 40S ribosome. The eIF-3 complex specifically targets and initiates translation of a subset of mRNAs involved in cell proliferation. This subunit can bind 18S rRNA. The polypeptide is Eukaryotic translation initiation factor 3 subunit G-2 (Drosophila erecta (Fruit fly)).